Reading from the N-terminus, the 80-residue chain is Serine rich endogenous peptide 15 (80 aa).

Residues 1-28 (MSKEKSYVIALLLSLLLCLSFQVGVSEA) form the signal peptide. 2 consecutive short sequence motifs (SCOOP motif) follow at residues 32–46 (AVTTRYSDSPRCANG) and 66–80 (PRVAVHSNSTKGKGP). Residues 37–80 (YSDSPRCANGSSASPPTRHCPRGRPRPPTPRVAVHSNSTKGKGP) are disordered. 2 short sequence motifs (sxS motif essential for MIK2 binding) span residues 38 to 40 (SDS) and 72 to 74 (SNS). Over residues 71–80 (HSNSTKGKGP) the composition is skewed to polar residues.

It belongs to the serine rich endogenous peptide (SCOOP) phytocytokine family. In terms of assembly, interacts with MIK2 (via extracellular leucine-rich repeat domain); this interaction triggers the formation of complex between MIK2 and the BAK1/SERK3 and SERK4 coreceptors, and subsequent BAK1 activation by phosphorylation. In terms of tissue distribution, mostly expressed in leaves, and, to a lower extent, in seedlings shoots, roots, stems, siliques, seeds and flowers.

The protein resides in the cell membrane. It is found in the secreted. The protein localises to the extracellular space. It localises to the apoplast. Its subcellular location is the endoplasmic reticulum. The protein resides in the golgi apparatus. Brassicaceae-specific phytocytokine (plant endogenous peptide released into the apoplast) perceived by MIK2 in a BAK1/SERK3 and SERK4 coreceptors-dependent manner, that modulates various physiological and antimicrobial processes including growth prevention and reactive oxygen species (ROS) response regulation. Inhibits root growth. The sequence is that of Serine rich endogenous peptide 15 from Arabidopsis thaliana (Mouse-ear cress).